The chain runs to 230 residues: Prolactin-3D1 (230 aa).

An N-terminal signal peptide occupies residues 1 to 29; the sequence is MQLTLTLSRASGMQLFLLVSSLLLWEKVA. Cystine bridges form between C81–C200 and C217–C225. N-linked (GlcNAc...) asparagine glycans are attached at residues N109 and N158.

Belongs to the somatotropin/prolactin family.

It is found in the secreted. The polypeptide is Prolactin-3D1 (Prl3d1) (Rattus norvegicus (Rat)).